The sequence spans 557 residues: Dihydroxy-acid dehydratase (557 aa).

C47 contacts [2Fe-2S] cluster. D79 is a binding site for Mg(2+). A [2Fe-2S] cluster-binding site is contributed by C120. Residues D121 and K122 each contribute to the Mg(2+) site. K122 carries the post-translational modification N6-carboxylysine. C192 serves as a coordination point for [2Fe-2S] cluster. Position 444 (E444) interacts with Mg(2+). The active-site Proton acceptor is S470.

The protein belongs to the IlvD/Edd family. In terms of assembly, homodimer. It depends on [2Fe-2S] cluster as a cofactor. Mg(2+) is required as a cofactor.

It carries out the reaction (2R)-2,3-dihydroxy-3-methylbutanoate = 3-methyl-2-oxobutanoate + H2O. The enzyme catalyses (2R,3R)-2,3-dihydroxy-3-methylpentanoate = (S)-3-methyl-2-oxopentanoate + H2O. It participates in amino-acid biosynthesis; L-isoleucine biosynthesis; L-isoleucine from 2-oxobutanoate: step 3/4. It functions in the pathway amino-acid biosynthesis; L-valine biosynthesis; L-valine from pyruvate: step 3/4. Functionally, functions in the biosynthesis of branched-chain amino acids. Catalyzes the dehydration of (2R,3R)-2,3-dihydroxy-3-methylpentanoate (2,3-dihydroxy-3-methylvalerate) into 2-oxo-3-methylpentanoate (2-oxo-3-methylvalerate) and of (2R)-2,3-dihydroxy-3-methylbutanoate (2,3-dihydroxyisovalerate) into 2-oxo-3-methylbutanoate (2-oxoisovalerate), the penultimate precursor to L-isoleucine and L-valine, respectively. This Synechococcus sp. (strain CC9605) protein is Dihydroxy-acid dehydratase.